The sequence spans 388 residues: Staphopain A (388 aa).

The signal sequence occupies residues 1–25; that stretch reads MKRNFPKLIALSLILSLSVTPIANA. Positions 26-214 are excised as a propeptide; sequence ESNSNIKAKD…TSQFKSNNYT (189 aa). Catalysis depends on residues C238, H334, and N355.

This sequence belongs to the peptidase C47 family. In terms of assembly, in the cytoplasm, prematurely activated/folded ScpA forms a stable non-covalent complex with ScpB. Post-translationally, cleavage leads to the activation of ScpA probably by an auto-catalytic manner.

It localises to the secreted. It catalyses the reaction Broad endopeptidase action on proteins including elastin, but rather limited hydrolysis of small-molecule substrates. Assays are conveniently made with hemoglobin, casein or Z-Phe-Arg-NHMec as substrate.. With respect to regulation, prematurely activated/folded staphopain A is inhibited by staphostatin A (ScpB), which is probably required to protect staphylococcal cytoplasmic proteins from degradation by ScpA. Cysteine protease that plays an important role in the inhibition of host innate immune response. Cleaves host elastins found in connective tissues, pulmonary surfactant protein A in the lungs, and the chemokine receptor CXCR2 on leukocytes. Proteolytic cleavage of surfactant protein A impairs bacterial phagocytosis by neutrophils while CXCR2 degradation blocks neutrophil activation and chemotaxis. Additionally, promotes vascular leakage by activating the plasma kallikerin/kinin system, resulting in hypotension. This Staphylococcus aureus (strain MSSA476) protein is Staphopain A (sspP).